The chain runs to 343 residues: Phenylalanine--tRNA ligase alpha subunit (343 aa).

Glutamate 264 contributes to the Mg(2+) binding site.

The protein belongs to the class-II aminoacyl-tRNA synthetase family. Phe-tRNA synthetase alpha subunit type 1 subfamily. As to quaternary structure, tetramer of two alpha and two beta subunits. The cofactor is Mg(2+).

The protein localises to the cytoplasm. The catalysed reaction is tRNA(Phe) + L-phenylalanine + ATP = L-phenylalanyl-tRNA(Phe) + AMP + diphosphate + H(+). The polypeptide is Phenylalanine--tRNA ligase alpha subunit (Azoarcus sp. (strain BH72)).